A 352-amino-acid polypeptide reads, in one-letter code: uncharacterized protein (352 aa).

The first 21 residues, 1 to 21 (MNVDSRVFRFFLVFLILVVVA), serve as a signal peptide directing secretion.

The protein belongs to the bacterial solute-binding protein 1 family. WtpA subfamily.

This is an uncharacterized protein from Methanosarcina acetivorans (strain ATCC 35395 / DSM 2834 / JCM 12185 / C2A).